Here is a 482-residue protein sequence, read N- to C-terminus: 2-succinylbenzoate--CoA ligase (482 aa).

It belongs to the ATP-dependent AMP-binding enzyme family. MenE subfamily.

It catalyses the reaction 2-succinylbenzoate + ATP + CoA = 2-succinylbenzoyl-CoA + AMP + diphosphate. The protein operates within quinol/quinone metabolism; 1,4-dihydroxy-2-naphthoate biosynthesis; 1,4-dihydroxy-2-naphthoate from chorismate: step 5/7. Its pathway is quinol/quinone metabolism; menaquinone biosynthesis. Converts 2-succinylbenzoate (OSB) to 2-succinylbenzoyl-CoA (OSB-CoA). The polypeptide is 2-succinylbenzoate--CoA ligase (Bacillus cereus (strain ATCC 14579 / DSM 31 / CCUG 7414 / JCM 2152 / NBRC 15305 / NCIMB 9373 / NCTC 2599 / NRRL B-3711)).